The sequence spans 686 residues: ATP-dependent zinc metalloprotease FtsH 1 (686 aa).

At 1–33 (MCFCIVSSPEAMHSNADSPSSGPGLQPVWTTLR) the chain is on the cytoplasmic side. The helical transmembrane segment at 34–54 (SPYVFWIGGAILLALLVHLGI) threads the bilayer. Topologically, residues 55-164 (KWQQASAPVR…TFAATQESDW (110 aa)) are periplasmic. A helical membrane pass occupies residues 165-185 (VGTLLLWGLPLGLIVGIWLFF). The Cytoplasmic portion of the chain corresponds to 186 to 686 (MRRMATGGRE…AEGASPSSQG (501 aa)). 257-264 (GPPGTGKT) is a binding site for ATP. His-479 is a binding site for Zn(2+). The active site involves Glu-480. The Zn(2+) site is built by His-483 and Asp-555. The interval 661 to 686 (YAWLKEGDGTSRNSASAEGASPSSQG) is disordered. A compositionally biased stretch (polar residues) spans 670–686 (TSRNSASAEGASPSSQG).

This sequence in the central section; belongs to the AAA ATPase family. In the C-terminal section; belongs to the peptidase M41 family. In terms of assembly, homohexamer. Zn(2+) serves as cofactor.

It is found in the cell inner membrane. Its function is as follows. Acts as a processive, ATP-dependent zinc metallopeptidase for both cytoplasmic and membrane proteins. Plays a role in the quality control of integral membrane proteins. The polypeptide is ATP-dependent zinc metalloprotease FtsH 1 (Salinibacter ruber (strain M8)).